A 289-amino-acid polypeptide reads, in one-letter code: BTB/POZ domain-containing protein KCTD7 (289 aa).

A disordered region spans residues 1–42 (MVVVNGREPDSRHSDGAMSSSEAEDDFLEPATPTATQAGHGL). The BTB domain occupies 53-141 (VPLNIGGAHF…YAIGPLLEQL (89 aa)).

Interacts with CUL3.

Its subcellular location is the cell membrane. It is found in the cytoplasm. The protein resides in the cytosol. Its function is as follows. May be involved in the control of excitability of cortical neurons. In Rattus norvegicus (Rat), this protein is BTB/POZ domain-containing protein KCTD7 (Kctd7).